The sequence spans 403 residues: Soluble calcium-activated nucleotidase 1 (403 aa).

Over Met-1–Arg-44 the chain is Cytoplasmic. The helical; Signal-anchor for type II membrane protein transmembrane segment at Val-45–Ser-61 threads the bilayer. Residues His-62–Ile-403 are Lumenal-facing. An N-linked (GlcNAc...) asparagine glycan is attached at Asn-90. Ser-170, Asp-171, Glu-217, Glu-286, Ser-347, and Glu-398 together coordinate Ca(2+).

This sequence belongs to the apyrase family. Monomer. Homodimer; dimerization is Ca(2+)-dependent. It depends on Ca(2+) as a cofactor. In terms of tissue distribution, detected in intestine, thymus, heart, lung, spleen, kidney, liver, testis, skeletal muscle and brain.

The protein localises to the endoplasmic reticulum membrane. Its subcellular location is the golgi apparatus. It localises to the golgi stack membrane. The catalysed reaction is a ribonucleoside 5'-diphosphate + H2O = a ribonucleoside 5'-phosphate + phosphate + H(+). In terms of biological role, calcium-dependent nucleotidase with a preference for UDP. The order of activity with different substrates is UDP &gt; GDP &gt; IDP &gt;&gt; UTP &gt; CDP = GTP = ITP. Has very low activity towards ADP and even lower activity towards ATP. Does not hydrolyze AMP and GMP. Involved in proteoglycan synthesis. The chain is Soluble calcium-activated nucleotidase 1 (Cant1) from Rattus norvegicus (Rat).